Reading from the N-terminus, the 230-residue chain is Sperm-associated antigen 7 homolog (230 aa).

Positions 1–45 are disordered; it reads MADLLGSILSSMEKPPTVHDQESRRKAREQAARLKKLEEDERRKK. Residues 16 to 45 are compositionally biased toward basic and acidic residues; it reads PTVHDQESRRKAREQAARLKKLEEDERRKK. The 64-residue stretch at 46–109 folds into the R3H domain; the sequence is AEFRKKMEKE…ESRYVMLFKK (64 aa). Residues 119–144 are compositionally biased toward basic and acidic residues; sequence EAYRKGEEWDPQKAEERRRLKEKAAL. Disordered stretches follow at residues 119–169 and 185–230; these read EAYR…KYSH and ANRA…GSSV. Position 158 is a phosphoserine (Ser158). A compositionally biased stretch (basic and acidic residues) spans 196–211; the sequence is NKRDTRSIEEAMNEIR.

The polypeptide is Sperm-associated antigen 7 homolog (spag7) (Danio rerio (Zebrafish)).